We begin with the raw amino-acid sequence, 267 residues long: Large ribosomal subunit protein uL4 (267 aa).

Belongs to the universal ribosomal protein uL4 family. As to quaternary structure, part of the 50S ribosomal subunit.

Its function is as follows. One of the primary rRNA binding proteins, this protein initially binds near the 5'-end of the 23S rRNA. It is important during the early stages of 50S assembly. It makes multiple contacts with different domains of the 23S rRNA in the assembled 50S subunit and ribosome. In terms of biological role, forms part of the polypeptide exit tunnel. In Saccharolobus solfataricus (strain ATCC 35092 / DSM 1617 / JCM 11322 / P2) (Sulfolobus solfataricus), this protein is Large ribosomal subunit protein uL4.